A 106-amino-acid polypeptide reads, in one-letter code: Transcription initiation factor IIA subunit 2 (106 aa).

This sequence belongs to the TFIIA subunit 2 family. As to quaternary structure, TFIIA is a heterodimer of the large unprocessed subunit 1 and a small subunit gamma. It was originally believed to be a heterotrimer of an alpha, a beta and a gamma subunit.

It localises to the nucleus. TFIIA is a component of the transcription machinery of RNA polymerase II and plays an important role in transcriptional activation. TFIIA in a complex with TBP mediates transcriptional activity. Protein involved in the resistance to X.oryzae. This chain is Transcription initiation factor IIA subunit 2 (TFIIAy), found in Oryza sativa subsp. indica (Rice).